Consider the following 831-residue polypeptide: MTISALELISYYTKFLSMLSQDEINKKLEEWPKHYDPKGIELKWQNIWMTKEFWEKVFRFRDEDEKSPVFVIDTPPPFTSGELHMGHAYWVTISDTIGRFKRLEGYNVLLPQGWDTQGLPTELKVQYKLKVPKENRELFLKKCIEWTEDMIKSMRTAMIRLGYRAEWERFEYRTYESKYRRIIQKSLIDMHKMGLVEMREGPVYWCPKCETALAQSEVGYKEEDGVLAYILFPFVDGEGGVTIATTRPELLGATQAVAVNPDDERYKSLVGRKVKIPLFDKEISIIADKAVEMTFGTGAVMISTYGDPQDIRWQLTYRLPVYEVVDDKGKIKNTNGLLDGLTVKEARKKIIEILKEKGYLIKVEKITHNVLAHTERSDCLSPIEFLIKKQIYIKVLEWRNKLLEDYKKMKFTPQRMSYYLEEWIKNLEWDWNISRQRVYGTPLPFWYCDNGHLIPAPEEVLPIDPSKVNPPVEKCPHCGLDLKPVKDVADVWVDSSVTVLYLTGFYDDKSRFTKTFPSSLRLQGTDIIRTWLFYTYYRTLALAGNIPFKEVLINGQVLGPDGTRMSKSKGNVVSPLDKVDEYGADAIRLTLLDAKIGDDFPFKWDTVKSKKLLLQKLWNAGRLSYPFIGKKKINKPSKLHEIDKWILQEHKKFVQQSIEAYRNYDFYIVVESIYSYFWETIADEYLELIKHRLFMEDESAIYTLSRIIKDLLILLYPIAPHITEEMYERLYGDKMSIALENLPDTSDLEDDGEAQKLGEYIKKATSAIRTLKIQNRLAIPTPISVKIYGPDDFIAKIKIIEEDLKKTLKLIDIIYQENNEIKVELLSDHGS.

A 'HIGH' region motif is present at residues 77–87; sequence PFTSGELHMGH. Positions 564–568 match the 'KMSKS' region motif; sequence RMSKS. Residue K567 coordinates ATP.

This sequence belongs to the class-I aminoacyl-tRNA synthetase family. ValS type 2 subfamily.

It localises to the cytoplasm. The enzyme catalyses tRNA(Val) + L-valine + ATP = L-valyl-tRNA(Val) + AMP + diphosphate. In terms of biological role, catalyzes the attachment of valine to tRNA(Val). As ValRS can inadvertently accommodate and process structurally similar amino acids such as threonine, to avoid such errors, it has a 'posttransfer' editing activity that hydrolyzes mischarged Thr-tRNA(Val) in a tRNA-dependent manner. The polypeptide is Valine--tRNA ligase (Sulfolobus acidocaldarius (strain ATCC 33909 / DSM 639 / JCM 8929 / NBRC 15157 / NCIMB 11770)).